Reading from the N-terminus, the 198-residue chain is LIM domain-containing protein D (198 aa).

Residues 5 to 65 enclose the LIM zinc-binding domain; the sequence is GKCTRCQKTV…ANHYPVGGLS (61 aa).

Its subcellular location is the cell projection. It is found in the pseudopodium. It localises to the cytoplasm. The protein resides in the cell cortex. The protein localises to the cytoskeleton. Its function is as follows. Binds to F-actin and may modulate the chemotactic response during early development and contribute to the maintenance of the strength of the actin cytoskeleton. The chain is LIM domain-containing protein D (limD) from Dictyostelium discoideum (Social amoeba).